We begin with the raw amino-acid sequence, 251 residues long: N-acetylmuramoyl-L-alanine amidase CwlA (251 aa).

Residues M1–A37 form the signal peptide. The N-acetylmuramoyl-L-alanine amidase domain maps to I38 to H140.

This sequence belongs to the N-acetylmuramoyl-L-alanine amidase 2 family.

It is found in the secreted. It carries out the reaction Hydrolyzes the link between N-acetylmuramoyl residues and L-amino acid residues in certain cell-wall glycopeptides.. Its function is as follows. Autolysins are involved in some important biological processes such as cell separation, cell-wall turnover, competence for genetic transformation, formation of the flagella and sporulation. The sequence is that of N-acetylmuramoyl-L-alanine amidase CwlA (cwlA) from Bacillus sp.